We begin with the raw amino-acid sequence, 55 residues long: KSIQGLSASPGDLSALHGKEAEMHVLQMIQDGQIHALINQKDGMVRFLEDPEQYK.

Residues 1-52 (KSIQGLSASPGDLSALHGKEAEMHVLQMIQDGQIHALINQKDGMVRFLEDPE) form the PCI domain.

This sequence belongs to the CSN3 family. Component of the CSN complex, probably composed of CSN1, CSN2, CSN3, CSN4, CSN5 (CSN5A or CSN5B), CSN6 (CSN6A or CSN6B), CSN7 and CSN8.

The protein resides in the cytoplasm. It is found in the nucleus. Functionally, component of the COP9 signalosome complex (CSN), a complex involved in various cellular and developmental processes such as photomorphogenesis and auxin and jasmonate responses. The CSN complex is an essential regulator of the ubiquitin (Ubl) conjugation pathway by mediating the deneddylation of the cullin subunits of SCF-type E3 ligase complexes, leading to decrease the Ubl ligase activity of SCF. It is involved in repression of photomorphogenesis in darkness by regulating the activity of COP1-containing Ubl ligase complexes. This is COP9 signalosome complex subunit 3 (CSN3) from Brassica oleracea (Wild cabbage).